Here is a 232-residue protein sequence, read N- to C-terminus: Clarin-1 (232 aa).

Residues 8–28 form a helical membrane-spanning segment; sequence IIFCMAGVLSFLCALGVVTAV. N-linked (GlcNAc...) asparagine glycosylation is present at Asn-48. Transmembrane regions (helical) follow at residues 101-121 and 135-155; these read IILF…FFMY and LGLY…MILF. The N-linked (GlcNAc...) asparagine glycan is linked to Asn-184. Residues 186-206 traverse the membrane as a helical segment; that stretch reads TTSFWVVFICFFVHFLNGLLI.

Belongs to the clarin family.

Its subcellular location is the cell membrane. May have a role in the excitatory ribbon synapse junctions between hair cells and cochlear ganglion cells and presumably also in analogous synapses within the retina. This chain is Clarin-1 (Clrn1), found in Mus musculus (Mouse).